Reading from the N-terminus, the 471-residue chain is UDP-N-acetylmuramoylalanine--D-glutamate ligase (471 aa).

Residue 123–129 (GTNGKST) participates in ATP binding.

Belongs to the MurCDEF family.

It is found in the cytoplasm. It carries out the reaction UDP-N-acetyl-alpha-D-muramoyl-L-alanine + D-glutamate + ATP = UDP-N-acetyl-alpha-D-muramoyl-L-alanyl-D-glutamate + ADP + phosphate + H(+). It participates in cell wall biogenesis; peptidoglycan biosynthesis. Functionally, cell wall formation. Catalyzes the addition of glutamate to the nucleotide precursor UDP-N-acetylmuramoyl-L-alanine (UMA). In Caulobacter vibrioides (strain ATCC 19089 / CIP 103742 / CB 15) (Caulobacter crescentus), this protein is UDP-N-acetylmuramoylalanine--D-glutamate ligase.